Consider the following 513-residue polypeptide: MGFFIQHGLTKPEILYPFLFGIFAVASLCIATLLFPASFSAASRVISWVLSIYLEVKNPIRHTETGRNIPGPSYVWPNGQGDIEKYVQGRSRSEQWQRKYGNVYRIWAGMTPEVVLTRPEQLHAIFKDSDKHTKATNSDSGYFMSRILGQCLGLMAGPRWKLLKGIAAPPFMHPTAVRSIGRIQEHVRAHFHDLETNGNLREGRIHPVQDLKMLPFFIVAEANYGSLTPAMKSELDSLAPARENLMKFVLFGGLARFNISRFFPTEANRQLRRFRSQWRAFNRAAYERAREKHPSAMVVQMYDAVHKGVLTEEQVAQTMDETLYANLDVTTGGLSWNLVFLAANPACQARLHEEISALTPAEEEGYISRNGTYLAACVLESSRLRPALPFTIPQSAPTERVVDGYRIPAGTNYVVDTWGLNVRDEFWAPDNSTYRPERFLNSSNTDLRYHFWRFGFGPRQCIGRYTADVVIRAILLHLVKHYELQMLEEGDFTQDPECWITHPDLQVKCVRRT.

The chain crosses the membrane as a helical span at residues 14-34; the sequence is ILYPFLFGIFAVASLCIATLL. N-linked (GlcNAc...) asparagine glycans are attached at residues Asn-258, Asn-370, Asn-431, and Asn-441. Heme is bound at residue Cys-461.

This sequence belongs to the cytochrome P450 family. Requires heme as cofactor.

The protein resides in the membrane. The protein operates within secondary metabolite biosynthesis. Cytochrome P450 monooxygenase; part of the gene cluster that mediates the biosynthesis of aspergillic acid, a hydroxamic acid-containing pyrazinone with aliphatic side chains that originates from leucine (Leu) and isoleucine (Ile). Aspergillic acid has antibiotic properties and was shown to be lethal to mice. The first step in the pathway is the production of deoxyaspergillic acid via a condensation between the Ile amine and the Leu carboxylic acid, followed by a reductive release from the protein forming the dipeptide aldehyde NH(2)-Leu-Ile-CHO, which could undergo an intermolecular cyclization resulting in a dihydropyrazinone. As the NRPS asaC lacks a condensation domain, it is improbable that it is responsible for condensation of Leu and Ile. One possibility is that asaC acts on a previously condensed dipeptide and functions as a Leu-Ile reductase to yield deoxyaspergillic acid. After asaC forms deoxyaspergillic acid, the cytochrome P450 asaD oxidizes the pyrazinone to the hydroxamic acid-containing bioactive metabolite aspergillic acid. The hydroxylase/desaturase asaB can then convert aspergillic acid to hydroxyaspergillic acid. Both aspergillic acid and hydroxyaspergillic acid can form complexes with iron producing ferriaspergillin analogs. This chain is Cytochrome P450 monooxygenase asaD, found in Aspergillus flavus (strain ATCC 200026 / FGSC A1120 / IAM 13836 / NRRL 3357 / JCM 12722 / SRRC 167).